The following is an 86-amino-acid chain: Exodeoxyribonuclease 7 small subunit (86 aa).

The tract at residues 64–86 (SNPETVQDKTDTDEPDSNEFSLT) is disordered.

It belongs to the XseB family. As to quaternary structure, heterooligomer composed of large and small subunits.

The protein resides in the cytoplasm. The enzyme catalyses Exonucleolytic cleavage in either 5'- to 3'- or 3'- to 5'-direction to yield nucleoside 5'-phosphates.. Functionally, bidirectionally degrades single-stranded DNA into large acid-insoluble oligonucleotides, which are then degraded further into small acid-soluble oligonucleotides. In Akkermansia muciniphila (strain ATCC BAA-835 / DSM 22959 / JCM 33894 / BCRC 81048 / CCUG 64013 / CIP 107961 / Muc), this protein is Exodeoxyribonuclease 7 small subunit.